The following is a 72-amino-acid chain: Translation initiation factor IF-1 (72 aa).

Residues 1-72 (MSKEELIEFE…TKGRITYRFK (72 aa)) form the S1-like domain.

This sequence belongs to the IF-1 family. Component of the 30S ribosomal translation pre-initiation complex which assembles on the 30S ribosome in the order IF-2 and IF-3, IF-1 and N-formylmethionyl-tRNA(fMet); mRNA recruitment can occur at any time during PIC assembly.

It is found in the cytoplasm. In terms of biological role, one of the essential components for the initiation of protein synthesis. Stabilizes the binding of IF-2 and IF-3 on the 30S subunit to which N-formylmethionyl-tRNA(fMet) subsequently binds. Helps modulate mRNA selection, yielding the 30S pre-initiation complex (PIC). Upon addition of the 50S ribosomal subunit IF-1, IF-2 and IF-3 are released leaving the mature 70S translation initiation complex. In Hyphomonas neptunium (strain ATCC 15444), this protein is Translation initiation factor IF-1.